The sequence spans 384 residues: Mannitol-1-phosphate 5-dehydrogenase (384 aa).

Residue 5-16 (AVHFGAGNIGRG) participates in NAD(+) binding.

This sequence belongs to the mannitol dehydrogenase family.

The enzyme catalyses D-mannitol 1-phosphate + NAD(+) = beta-D-fructose 6-phosphate + NADH + H(+). This chain is Mannitol-1-phosphate 5-dehydrogenase, found in Vibrio cholerae serotype O1 (strain ATCC 39541 / Classical Ogawa 395 / O395).